The chain runs to 148 residues: Ribonuclease H (148 aa).

The 142-residue stretch at 3 to 144 folds into the RNase H type-1 domain; sequence DKEQVVIYTD…ADQLANRGVA (142 aa). Residues Asp12, Glu50, Asp72, and Asp136 each coordinate Mg(2+). A disordered region spans residues 125–148; sequence GHTGDPGNERADQLANRGVAELPR.

This sequence belongs to the RNase H family. In terms of assembly, monomer. Requires Mg(2+) as cofactor.

It is found in the cytoplasm. It carries out the reaction Endonucleolytic cleavage to 5'-phosphomonoester.. Endonuclease that specifically degrades the RNA of RNA-DNA hybrids. This is Ribonuclease H from Pseudomonas aeruginosa (strain LESB58).